The sequence spans 743 residues: Inhibitor of nuclear factor kappa-B kinase subunit alpha (743 aa).

One can recognise a Protein kinase domain in the interval 15-300; the sequence is WDMKDRLGTG…IDCGRPRCFM (286 aa). Residues 21 to 29 and Lys-44 contribute to the ATP site; that span reads LGTGGFGNV. Asp-144 (proton acceptor) is an active-site residue. Residues 453–474 form a leucine-zipper region; the sequence is LLRFNTNLTKMKNTMVSASQQL. The NEMO-binding stretch occupies residues 736–741; the sequence is MDFSWL.

This sequence belongs to the protein kinase superfamily. Ser/Thr protein kinase family. I-kappa-B kinase subfamily.

It localises to the cytoplasm. The protein localises to the nucleus. The enzyme catalyses L-seryl-[I-kappa-B protein] + ATP = O-phospho-L-seryl-[I-kappa-B protein] + ADP + H(+). With respect to regulation, activated when phosphorylated and inactivated when dephosphorylated. Functionally, phosphorylates inhibitors of NF-kappa-B thus leading to the dissociation of the inhibitor/NF-kappa-B complex and ultimately the degradation of the inhibitor. Phosphorylates 'Ser-10' of histone H3 at NF-kappa-B-regulated promoters during inflammatory responses triggered by cytokines. The sequence is that of Inhibitor of nuclear factor kappa-B kinase subunit alpha (chuk) from Xenopus laevis (African clawed frog).